We begin with the raw amino-acid sequence, 90 residues long: UPF0386 protein Rru_A2144 (90 aa).

This sequence belongs to the UPF0386 family.

This Rhodospirillum rubrum (strain ATCC 11170 / ATH 1.1.1 / DSM 467 / LMG 4362 / NCIMB 8255 / S1) protein is UPF0386 protein Rru_A2144.